The following is a 253-amino-acid chain: Imidazole glycerol phosphate synthase subunit HisF (253 aa).

Catalysis depends on residues Asp13 and Asp132.

This sequence belongs to the HisA/HisF family. As to quaternary structure, heterodimer of HisH and HisF.

It is found in the cytoplasm. The catalysed reaction is 5-[(5-phospho-1-deoxy-D-ribulos-1-ylimino)methylamino]-1-(5-phospho-beta-D-ribosyl)imidazole-4-carboxamide + L-glutamine = D-erythro-1-(imidazol-4-yl)glycerol 3-phosphate + 5-amino-1-(5-phospho-beta-D-ribosyl)imidazole-4-carboxamide + L-glutamate + H(+). It participates in amino-acid biosynthesis; L-histidine biosynthesis; L-histidine from 5-phospho-alpha-D-ribose 1-diphosphate: step 5/9. In terms of biological role, IGPS catalyzes the conversion of PRFAR and glutamine to IGP, AICAR and glutamate. The HisF subunit catalyzes the cyclization activity that produces IGP and AICAR from PRFAR using the ammonia provided by the HisH subunit. The chain is Imidazole glycerol phosphate synthase subunit HisF from Aliarcobacter butzleri (strain RM4018) (Arcobacter butzleri).